The primary structure comprises 901 residues: MLIKLLTKVFGSRNDRTLRRMRKAVSLINAMEPEMEKLSDDELKAKTNEFRARIEKGESVESLIPEAFAVVREASKRVFGMRHFDVQLLGGMVLNDRCIAEMRTGEGKTLTATLPAYLNALSGKGVHVVTVNDYLAQRDAENNRPLFEFLGMSVGINLPGMPAPAKREAYAADITYGTNNEYGFDYLRDNMAFSPEERVQRKLHYALVDEVDSILIDEARTPLIISGPAEDSSEMYKKVNKIIPHLIRQEKEDSDTFQGEGHFSVDEKARQVNLTERGLVLIEELLVQEGIMDEGESLYSPGNIMLMHHVTAALRAHALFTRDVDYIVKDGEVIIVDEHTGRTMQGRRWSDGLHQAVEAKEGVEIQNENQTLASITFQNYFRLYEKLAGMTGTADTEAFEFSSIYKLDTVVVPTNRPMIRKDLPDLVYMTEAEKIQAIIEDIKERTANGQPVLVGTISIEKSEVVSRELTKAGIKHNVLNAKFHANEAGIVAQAGYPAAVTIATNMAGRGTDIMLGGSWQAEVAALEAPTEEQIAQIKADWQVRHDAVLAAGGLHIIGTERHESRRIDNQLRGRSGRQGDPGSSRFYLSMEDALMRIFASDRVSGMMRKLGMKPGEAIEHPWVTKAIANAQRKVESRNFDIRKQLLEYDDVANDQRRAIYTQRNELLDVSDVSDTINSIREDVFKATIDAYIPPQSLEEMWDIPGLQERLKNDFDLELPIAEWLDKEPELHEETLRERILAQSIEVYQRKEEVVGAEMMRHFEKGVMLQTLDSLWKEHLAAMDYLRQGIHLRGYAQKDPKQEYKRESFAMFAAMLESLKYEVISTLSKVQVRMPEEVEAMEMQRREEAERLAQMQQLSHQDDDAAVAADLAAQTGERKIGRNDPCPCGSGKKYKQCHGRLS.

Residues Gln-87, 105–109, and Asp-512 each bind ATP; that span reads GEGKT. Residues Cys-885, Cys-887, Cys-896, and His-897 each coordinate Zn(2+).

It belongs to the SecA family. In terms of assembly, monomer and homodimer. Part of the essential Sec protein translocation apparatus which comprises SecA, SecYEG and auxiliary proteins SecDF-YajC and YidC. Zn(2+) serves as cofactor.

It is found in the cell inner membrane. Its subcellular location is the cytoplasm. It carries out the reaction ATP + H2O + cellular proteinSide 1 = ADP + phosphate + cellular proteinSide 2.. In terms of biological role, part of the Sec protein translocase complex. Interacts with the SecYEG preprotein conducting channel. Has a central role in coupling the hydrolysis of ATP to the transfer of proteins into and across the cell membrane, serving both as a receptor for the preprotein-SecB complex and as an ATP-driven molecular motor driving the stepwise translocation of polypeptide chains across the membrane. The polypeptide is Protein translocase subunit SecA (Salmonella paratyphi B (strain ATCC BAA-1250 / SPB7)).